The sequence spans 129 residues: MEAKEKKYGEIEIEKAQLEAWPNPNPERDYMIEITFPEFTCLCPRSGYPDFATIKIRYIPDKYIVELKSLKLWLNKFRNRYISHEAATNEIYQALYDLLKPRFLEVVGDFHPRGNVHTVVRVRSDENYG.

Cys-43 acts as the Thioimide intermediate in catalysis. Asp-50 serves as the catalytic Proton donor. Substrate-binding positions include Val-65–Leu-67 and His-84–Glu-85.

The protein belongs to the GTP cyclohydrolase I family. QueF type 1 subfamily.

Its subcellular location is the cytoplasm. The enzyme catalyses 7-aminomethyl-7-carbaguanine + 2 NADP(+) = 7-cyano-7-deazaguanine + 2 NADPH + 3 H(+). It participates in tRNA modification; tRNA-queuosine biosynthesis. Functionally, catalyzes the NADPH-dependent reduction of 7-cyano-7-deazaguanine (preQ0) to 7-aminomethyl-7-deazaguanine (preQ1). This Aquifex aeolicus (strain VF5) protein is NADPH-dependent 7-cyano-7-deazaguanine reductase.